The following is a 332-amino-acid chain: Ferredoxin--NADP reductase 2 (332 aa).

7 residues coordinate FAD: aspartate 33, glutamine 41, tyrosine 46, valine 86, isoleucine 121, aspartate 282, and serine 325.

It belongs to the ferredoxin--NADP reductase type 2 family. As to quaternary structure, homodimer. It depends on FAD as a cofactor.

It carries out the reaction 2 reduced [2Fe-2S]-[ferredoxin] + NADP(+) + H(+) = 2 oxidized [2Fe-2S]-[ferredoxin] + NADPH. This chain is Ferredoxin--NADP reductase 2, found in Sulfolobus acidocaldarius (strain ATCC 33909 / DSM 639 / JCM 8929 / NBRC 15157 / NCIMB 11770).